A 311-amino-acid polypeptide reads, in one-letter code: 4-diphosphocytidyl-2-C-methyl-D-erythritol kinase (311 aa).

Lys10 is an active-site residue. 105 to 115 provides a ligand contact to ATP; the sequence is PVAGGMAGGSA. Asp146 is an active-site residue.

This sequence belongs to the GHMP kinase family. IspE subfamily.

The catalysed reaction is 4-CDP-2-C-methyl-D-erythritol + ATP = 4-CDP-2-C-methyl-D-erythritol 2-phosphate + ADP + H(+). Its pathway is isoprenoid biosynthesis; isopentenyl diphosphate biosynthesis via DXP pathway; isopentenyl diphosphate from 1-deoxy-D-xylulose 5-phosphate: step 3/6. Its function is as follows. Catalyzes the phosphorylation of the position 2 hydroxy group of 4-diphosphocytidyl-2C-methyl-D-erythritol. The protein is 4-diphosphocytidyl-2-C-methyl-D-erythritol kinase of Corynebacterium glutamicum (strain ATCC 13032 / DSM 20300 / JCM 1318 / BCRC 11384 / CCUG 27702 / LMG 3730 / NBRC 12168 / NCIMB 10025 / NRRL B-2784 / 534).